The primary structure comprises 82 residues: ATP synthase subunit c (82 aa).

2 helical membrane passes run 7–27 and 53–73; these read FVAL…CIGI and FLLA…AMMF.

The protein belongs to the ATPase C chain family. F-type ATPases have 2 components, F(1) - the catalytic core - and F(0) - the membrane proton channel. F(1) has five subunits: alpha(3), beta(3), gamma(1), delta(1), epsilon(1). F(0) has three main subunits: a(1), b(2) and c(10-14). The alpha and beta chains form an alternating ring which encloses part of the gamma chain. F(1) is attached to F(0) by a central stalk formed by the gamma and epsilon chains, while a peripheral stalk is formed by the delta and b chains.

Its subcellular location is the cell inner membrane. F(1)F(0) ATP synthase produces ATP from ADP in the presence of a proton or sodium gradient. F-type ATPases consist of two structural domains, F(1) containing the extramembraneous catalytic core and F(0) containing the membrane proton channel, linked together by a central stalk and a peripheral stalk. During catalysis, ATP synthesis in the catalytic domain of F(1) is coupled via a rotary mechanism of the central stalk subunits to proton translocation. In terms of biological role, key component of the F(0) channel; it plays a direct role in translocation across the membrane. A homomeric c-ring of between 10-14 subunits forms the central stalk rotor element with the F(1) delta and epsilon subunits. The protein is ATP synthase subunit c of Aromatoleum aromaticum (strain DSM 19018 / LMG 30748 / EbN1) (Azoarcus sp. (strain EbN1)).